Reading from the N-terminus, the 152-residue chain is Protein CHLOROPLAST VESICULATION (152 aa).

Residues Met-1–Leu-22 constitute a chloroplast transit peptide. The chain crosses the membrane as a helical span at residues Cys-48–Ile-65. Residues Arg-92–Val-152 are important for chloroplast destabilization and the formation of CV-containing vesicles.

As to quaternary structure, interacts with the photosystem II subunit PsbO1 via its C-terminal region in the chloroplast thylakoid membrane and in CV-containing vesicles (CCVs). In terms of tissue distribution, mostly expressed in senescent and mature leaves but not in young leaves.

The protein resides in the plastid. It is found in the chloroplast membrane. The protein localises to the chloroplast thylakoid membrane. Its subcellular location is the chloroplast envelope. It localises to the vacuole. The protein resides in the vesicle. In terms of biological role, triggers stress-induced chloroplast degradation, independently of autophagy and senescence-associated vacuoles. After targeting to the chloroplast, triggers its destabilization and subsequent disassembly, inducing the formation of CV-containing vesicles (CCVs) carrying stromal proteins, envelope membrane proteins, and thylakoid membrane proteins which are released from the chloroplasts and mobilized to the vacuole for proteolysis. In Arabidopsis thaliana (Mouse-ear cress), this protein is Protein CHLOROPLAST VESICULATION.